The chain runs to 100 residues: NADH-quinone oxidoreductase subunit K 2 (100 aa).

Transmembrane regions (helical) follow at residues 4 to 24, 28 to 48, and 60 to 80; these read LWWFIVLGVVLFVIGAAGVLL, ILVVLMSLELLLNSVNINFIA, and IFAIFVIAITAAEVAVALGIL.

Belongs to the complex I subunit 4L family. As to quaternary structure, NDH-1 is composed of 14 different subunits. Subunits NuoA, H, J, K, L, M, N constitute the membrane sector of the complex.

Its subcellular location is the cell inner membrane. It catalyses the reaction a quinone + NADH + 5 H(+)(in) = a quinol + NAD(+) + 4 H(+)(out). NDH-1 shuttles electrons from NADH, via FMN and iron-sulfur (Fe-S) centers, to quinones in the respiratory chain. The immediate electron acceptor for the enzyme in this species is believed to be ubiquinone. Couples the redox reaction to proton translocation (for every two electrons transferred, four hydrogen ions are translocated across the cytoplasmic membrane), and thus conserves the redox energy in a proton gradient. The chain is NADH-quinone oxidoreductase subunit K 2 from Rhizobium etli (strain CIAT 652).